We begin with the raw amino-acid sequence, 141 residues long: Putative phosphatidylglycerol/phosphatidylinositol transfer protein DDB_G0278295 (141 aa).

Residues 1 to 19 (MRLLLALFFVLALVSPSFT) form the signal peptide. N-linked (GlcNAc...) asparagine glycosylation is found at N82 and N104.

It belongs to the NPC2 family. As to quaternary structure, monomer.

Its function is as follows. Catalyzes the intermembrane transfer of phosphatidylglycerol and phosphatidylinositol. This is Putative phosphatidylglycerol/phosphatidylinositol transfer protein DDB_G0278295 from Dictyostelium discoideum (Social amoeba).